We begin with the raw amino-acid sequence, 190 residues long: Dirigent protein 15 (190 aa).

A signal peptide spans 1 to 19; sequence MKSTLIIFFTLCLSMAVMA. 2 N-linked (GlcNAc...) asparagine glycosylation sites follow: asparagine 63 and asparagine 128.

It belongs to the plant dirigent protein family. Homodimer.

The protein localises to the secreted. Its subcellular location is the extracellular space. It is found in the apoplast. Functionally, dirigent proteins impart stereoselectivity on the phenoxy radical-coupling reaction, yielding optically active lignans from two molecules of coniferyl alcohol in the biosynthesis of lignans, flavonolignans, and alkaloids and thus plays a central role in plant secondary metabolism. This chain is Dirigent protein 15 (DIR15), found in Arabidopsis thaliana (Mouse-ear cress).